The sequence spans 54 residues: Lectin alpha-1 chain (54 aa).

This sequence belongs to the leguminous lectin family. As to quaternary structure, tetramer of two alpha and two beta chains.

In Lathyrus hirsutus (Rough pea), this protein is Lectin alpha-1 chain.